The following is a 272-amino-acid chain: RNA exonuclease 4 (272 aa).

Over residues methionine 1–asparagine 17 the composition is skewed to low complexity. Positions methionine 1–lysine 33 are disordered. The Exonuclease domain occupies tyrosine 99 to phenylalanine 250.

Belongs to the REXO4 family.

The protein resides in the nucleus. Its function is as follows. Exoribonuclease involved in ribosome biosynthesis. Involved in the processing of ITS1, the internal transcribed spacer localized between the 18S and 5.8S rRNAs. The protein is RNA exonuclease 4 (REX4) of Debaryomyces hansenii (strain ATCC 36239 / CBS 767 / BCRC 21394 / JCM 1990 / NBRC 0083 / IGC 2968) (Yeast).